Reading from the N-terminus, the 717-residue chain is Coupling protein TraD (717 aa).

Topologically, residues 1-27 (MSFNAKDMTQGGQIASMRIRMFSQIAN) are cytoplasmic. Residues 28–47 (IMLYCLFIFFWILVGLVLWI) form a helical membrane-spanning segment. Over 48–104 (KISWQTFVNGCIYWWCTTLEGMRDLIKSQPVYEIQYYGKTFRMNAAQVLHDKYMIWC) the chain is Periplasmic. The chain crosses the membrane as a helical span at residues 105–130 (SEQLWSAFVLAAVVALVICLITFFVV). At 131–717 (SWILGRQGKQ…GEDVEPGDDF (587 aa)) the chain is on the cytoplasmic side. Residue 192–199 (GTVGAGKS) participates in ATP binding. Disordered regions lie at residues 614-639 (EDVTQAEQPQQPVSPAINDKKSDSGV) and 650-669 (LKMKPEEEMEQQLPPGISES).

Belongs to the TrwB coupling protein family. As to quaternary structure, interacts with relaxosome component TraM. May form a hexamer in the membrane.

Its subcellular location is the cell inner membrane. In terms of biological role, conjugative DNA transfer (CDT) is the unidirectional transfer of ssDNA plasmid from a donor to a recipient cell. It is the central mechanism by which antibiotic resistance and virulence factors are propagated in bacterial populations. Couples the transferosome to a type IV secretion system. Probably forms a pore through which single-stranded plasmid DNA is transferred to the secretion system. The last 37 residues are important for determining plasmid specificity and transfer efficiency, with additional specificity conferred by the TraD-TraM pair. The sequence is that of Coupling protein TraD (traD) from Escherichia coli (strain K12).